Here is a 149-residue protein sequence, read N- to C-terminus: Small ribosomal subunit protein uS13 (149 aa).

This sequence belongs to the universal ribosomal protein uS13 family. Part of the 30S ribosomal subunit. Forms a loose heterodimer with protein S19. Forms two bridges to the 50S subunit in the 70S ribosome.

Its function is as follows. Located at the top of the head of the 30S subunit, it contacts several helices of the 16S rRNA. In the 70S ribosome it contacts the 23S rRNA (bridge B1a) and protein L5 of the 50S subunit (bridge B1b), connecting the 2 subunits; these bridges are implicated in subunit movement. The sequence is that of Small ribosomal subunit protein uS13 from Methanococcus maripaludis (strain DSM 14266 / JCM 13030 / NBRC 101832 / S2 / LL).